A 141-amino-acid chain; its full sequence is Hemoglobin subunit alpha-A/A' (141 aa).

The Globin domain maps to V1–R141. Position 58 (H58) interacts with O2. H87 provides a ligand contact to heme b.

Belongs to the globin family. In terms of assembly, heterotetramer of two alpha chains and two beta chains. As to expression, red blood cells.

Involved in oxygen transport from the lung to the various peripheral tissues. The polypeptide is Hemoglobin subunit alpha-A/A' (HBAA) (Gyps rueppelli (Rueppell's griffon)).